The primary structure comprises 366 residues: Transcription factor MYB61 (366 aa).

HTH myb-type domains lie at 9–61 and 62–116; these read KQKL…INYL and RPDL…KKKL. 2 consecutive DNA-binding regions (H-T-H motif) follow at residues 37–61 and 89–112; these read WSSV…INYL and WSQI…NSSI. The segment at 115-164 is disordered; it reads KLKQRGIDPNTHKPISEVESFSDKDKPTTSNNKRSGNDHKSPSSSSATNQ. The segment covering 124-141 has biased composition (basic and acidic residues); the sequence is NTHKPISEVESFSDKDKP.

In terms of tissue distribution, expressed specifically in guard cells. Expressed in sink tissues, such as xylem, roots and developing seeds.

It is found in the nucleus. In terms of biological role, transcription factor that coordinates a small network of downstream target genes required for several aspects of plant growth and development, such as xylem formation and xylem cell differentiation, and lateral root formation. Regulates a specific set of target genes by binding DNA to the AC cis-element 5'-ACCTAC-3'. Functions as a transcriptional regulator of stomatal closure. Plays a role the regulation of stomatal pore size independently of abscisic acid (ABA). Required for seed coat mucilage deposition during the development of the seed coat epidermis. Involved in the induction of trichome initiation and branching by positively regulating GL1 and GL2. Required for gibberellin (GA) biosynthesis and degradation by positively affecting the expression of the enzymes that convert GA9 into the bioactive GA4, as well as the enzymes involved in the degradation of GA4. The polypeptide is Transcription factor MYB61 (Arabidopsis thaliana (Mouse-ear cress)).